A 460-amino-acid polypeptide reads, in one-letter code: tRNA modification GTPase MnmE (460 aa).

Arg25, Glu87, and Arg126 together coordinate (6S)-5-formyl-5,6,7,8-tetrahydrofolate. The region spanning 221–381 is the TrmE-type G domain; that stretch reads GLKVAIVGRP…LETAIANLVQ (161 aa). Asn231 serves as a coordination point for K(+). Residues 231–236, 250–256, and 275–278 each bind GTP; these read NVGKSS, TDLPGTT, and DTAG. Ser235 contacts Mg(2+). K(+)-binding residues include Thr250, Leu252, and Thr255. Thr256 is a Mg(2+) binding site. Lys460 contributes to the (6S)-5-formyl-5,6,7,8-tetrahydrofolate binding site.

The protein belongs to the TRAFAC class TrmE-Era-EngA-EngB-Septin-like GTPase superfamily. TrmE GTPase family. Homodimer. Heterotetramer of two MnmE and two MnmG subunits. Requires K(+) as cofactor.

It localises to the cytoplasm. Exhibits a very high intrinsic GTPase hydrolysis rate. Involved in the addition of a carboxymethylaminomethyl (cmnm) group at the wobble position (U34) of certain tRNAs, forming tRNA-cmnm(5)s(2)U34. This is tRNA modification GTPase MnmE from Picosynechococcus sp. (strain ATCC 27264 / PCC 7002 / PR-6) (Agmenellum quadruplicatum).